The chain runs to 154 residues: MAANKERTFIAIKPDGVQRGLMGDIIKRFEQKGFRLVAMKFLQASQDLLRQHYIDLKDRPFYPGLVEYMNSGPVLAMVWEGLNVVKTGRVMLGETNPADSKPGTIRGDLCIQVGRNIIHGSDSVDSANKEIALWFKDEELVEYKSCAYEWVYEN.

Residues lysine 13, phenylalanine 61, arginine 89, threonine 95, arginine 106, and asparagine 116 each contribute to the ATP site. Histidine 119 (pros-phosphohistidine intermediate) is an active-site residue.

This sequence belongs to the NDK family. It depends on Mg(2+) as a cofactor.

The protein resides in the cytoplasm. It catalyses the reaction a 2'-deoxyribonucleoside 5'-diphosphate + ATP = a 2'-deoxyribonucleoside 5'-triphosphate + ADP. It carries out the reaction a ribonucleoside 5'-diphosphate + ATP = a ribonucleoside 5'-triphosphate + ADP. Its function is as follows. Major role in the synthesis of nucleoside triphosphates other than ATP. The ATP gamma phosphate is transferred to the NDP beta phosphate via a ping-pong mechanism, using a phosphorylated active-site intermediate. This is Nucleoside diphosphate kinase A2 from Xenopus laevis (African clawed frog).